The sequence spans 648 residues: Penicillin-binding protein PbpB (648 aa).

Residues M1–E35 are disordered. The chain crosses the membrane as a helical span at residues G52–V72. Catalysis depends on S355, which acts as the Acyl-ester intermediate.

It belongs to the transpeptidase family. Interacts with Wag31.

It localises to the cell membrane. This chain is Penicillin-binding protein PbpB (pbpB), found in Mycolicibacterium smegmatis (strain ATCC 700084 / mc(2)155) (Mycobacterium smegmatis).